The sequence spans 453 residues: Bifunctional protein GlmU (453 aa).

The tract at residues Met-1–Arg-231 is pyrophosphorylase. Residues Leu-10–Gly-13, Lys-24, Gln-77, Gly-82–Thr-83, Tyr-105–Asp-107, Gly-143, Glu-157, Asn-172, and Asn-229 contribute to the UDP-N-acetyl-alpha-D-glucosamine site. Asp-107 is a Mg(2+) binding site. Residue Asn-229 coordinates Mg(2+). The linker stretch occupies residues Ala-232–Ser-252. Residues Gly-253 to Gly-453 form an N-acetyltransferase region. UDP-N-acetyl-alpha-D-glucosamine is bound by residues Arg-318 and Lys-336. His-348 serves as the catalytic Proton acceptor. Tyr-351 and Asn-362 together coordinate UDP-N-acetyl-alpha-D-glucosamine. Acetyl-CoA contacts are provided by residues Ala-365, Asn-371–Tyr-372, Ser-390, Ser-408, and Arg-425.

The protein in the N-terminal section; belongs to the N-acetylglucosamine-1-phosphate uridyltransferase family. It in the C-terminal section; belongs to the transferase hexapeptide repeat family. Homotrimer. Requires Mg(2+) as cofactor.

The protein localises to the cytoplasm. It carries out the reaction alpha-D-glucosamine 1-phosphate + acetyl-CoA = N-acetyl-alpha-D-glucosamine 1-phosphate + CoA + H(+). It catalyses the reaction N-acetyl-alpha-D-glucosamine 1-phosphate + UTP + H(+) = UDP-N-acetyl-alpha-D-glucosamine + diphosphate. Its pathway is nucleotide-sugar biosynthesis; UDP-N-acetyl-alpha-D-glucosamine biosynthesis; N-acetyl-alpha-D-glucosamine 1-phosphate from alpha-D-glucosamine 6-phosphate (route II): step 2/2. It participates in nucleotide-sugar biosynthesis; UDP-N-acetyl-alpha-D-glucosamine biosynthesis; UDP-N-acetyl-alpha-D-glucosamine from N-acetyl-alpha-D-glucosamine 1-phosphate: step 1/1. The protein operates within bacterial outer membrane biogenesis; LPS lipid A biosynthesis. Functionally, catalyzes the last two sequential reactions in the de novo biosynthetic pathway for UDP-N-acetylglucosamine (UDP-GlcNAc). The C-terminal domain catalyzes the transfer of acetyl group from acetyl coenzyme A to glucosamine-1-phosphate (GlcN-1-P) to produce N-acetylglucosamine-1-phosphate (GlcNAc-1-P), which is converted into UDP-GlcNAc by the transfer of uridine 5-monophosphate (from uridine 5-triphosphate), a reaction catalyzed by the N-terminal domain. The chain is Bifunctional protein GlmU from Rhizobium leguminosarum bv. trifolii (strain WSM2304).